The chain runs to 843 residues: MPLSYQHFRKLLLLDDEAGPLEEELPRLADEGLNRRVAEDLNLGNPNVSIPWTHKVGNFTGLYSSTVPVFNPEWQTPSFPDIHLQEDIVDRCKQFVGPLTVNENRRLKLIMPARFYPNVTKYLPLDKGIKPYYPEHVVNHYFQARHYLHTLWKAGILYKRESTHSASFCGSPYSWEQDLQHGRLVFQTSKRHGDKSFCPQSPGILPRSSVGPCIQSQLRKSRLGPQPPQGQLAGRPQGGSGSIRARVHPSPWGTVGVEPSGSGHTHICASSSSSCLHQSAVRKAAYSLISTSKGHSSSGRAVELHHFPPNSSRSQSQGSVPSCWWLQFRNSKPCSEYCLCHIVNLIDDWGPCAEHGEHRIRTPRTPARVTGGVFLVDKNPHNTTESRLVVDFSQFSRGNTRVSWPKFAVPNLQSLTNLLSSNLSWLSLDVSAAFYHLPLHPAAMPHLLVGSSGLSRYVARLSSNSRIINHQHGTMQDLHNSCSRNLYVSLMLLYKTYGRKLHLYSHPIILGFRKIPMGVGLSPFLLAQFTSAICSVVRRAFPHCLAFSYMDDVVLGAKSVQHLESLYAAVTNFLVSLGIHVNPHKTKRWGYSLNFMGYVIGSWGTLPQEHIRQKIKLCFRKLPVNRPIDWKVCQRIVGLLGFAAPFTQCGYPALMPLYACISAKQAFTFSPTYKAFLSQQYLNLYPVARQRSGLCQVFADATPTGWGLAIGHQRMRGTFVSPLPIHTAELLAACFARSRSGAKLIGTDNSVVLSRKYTSFPWLLGCAANWILRGTSFVYVPSALNPADDPSRGRLGLYRPLLRLPYRPTTGRTSLYADSPSVPSHLPDRVHFASPLHVAWRPP.

Positions 1–177 are terminal protein domain (TP); the sequence is MPLSYQHFRK…FCGSPYSWEQ (177 aa). The tract at residues 178–346 is spacer; the sequence is DLQHGRLVFQ…YCLCHIVNLI (169 aa). 2 disordered regions span residues 220–258 and 292–319; these read KSRL…VGVE and SKGH…SQGS. A compositionally biased stretch (low complexity) spans 308–319; the sequence is PPNSSRSQSQGS. A polymerase/reverse transcriptase domain (RT) region spans residues 347–690; it reads DDWGPCAEHG…YLNLYPVARQ (344 aa). One can recognise a Reverse transcriptase domain in the interval 357-600; it reads EHRIRTPRTP…YSLNFMGYVI (244 aa). Mg(2+) contacts are provided by Asp429, Asp551, and Asp552.

It belongs to the hepadnaviridae P protein family.

It catalyses the reaction DNA(n) + a 2'-deoxyribonucleoside 5'-triphosphate = DNA(n+1) + diphosphate. The enzyme catalyses Endonucleolytic cleavage to 5'-phosphomonoester.. With respect to regulation, activated by host HSP70 and HSP40 in vitro to be able to bind the epsilon loop of the pgRNA. Because deletion of the RNase H region renders the protein partly chaperone-independent, the chaperones may be needed indirectly to relieve occlusion of the RNA-binding site by this domain. Inhibited by several reverse-transcriptase inhibitors: Lamivudine, Adefovir and Entecavir. Its function is as follows. Multifunctional enzyme that converts the viral RNA genome into dsDNA in viral cytoplasmic capsids. This enzyme displays a DNA polymerase activity that can copy either DNA or RNA templates, and a ribonuclease H (RNase H) activity that cleaves the RNA strand of RNA-DNA heteroduplexes in a partially processive 3'- to 5'-endonucleasic mode. Neo-synthesized pregenomic RNA (pgRNA) are encapsidated together with the P protein, and reverse-transcribed inside the nucleocapsid. Initiation of reverse-transcription occurs first by binding the epsilon loop on the pgRNA genome, and is initiated by protein priming, thereby the 5'-end of (-)DNA is covalently linked to P protein. Partial (+)DNA is synthesized from the (-)DNA template and generates the relaxed circular DNA (RC-DNA) genome. After budding and infection, the RC-DNA migrates in the nucleus, and is converted into a plasmid-like covalently closed circular DNA (cccDNA). The activity of P protein does not seem to be necessary for cccDNA generation, and is presumably released from (+)DNA by host nuclear DNA repair machinery. In Hepatitis B virus genotype B1 (isolate Japan/Yamagata-2/1998) (HBV-B), this protein is Protein P.